Reading from the N-terminus, the 164-residue chain is 4-hydroxy-4-methyl-2-oxoglutarate aldolase (164 aa).

Residues 74 to 77 and Arg-96 each bind substrate; that span reads GGNL. Residue Asp-97 participates in a divalent metal cation binding.

Belongs to the class II aldolase/RraA-like family. In terms of assembly, homotrimer. Requires Ni(2+) as cofactor. Co(2+) serves as cofactor. It depends on Zn(2+) as a cofactor.

It catalyses the reaction 4-hydroxy-4-methyl-2-oxoglutarate = 2 pyruvate. It carries out the reaction oxaloacetate + H(+) = pyruvate + CO2. Its activity is regulated as follows. Competitively inhibited by oxalate, a pyruvate enolate analog. Functionally, catalyzes the aldol cleavage of 4-hydroxy-4-methyl-2-oxoglutarate (HMG) into 2 molecules of pyruvate. Also contains a secondary oxaloacetate (OAA) decarboxylase activity due to the common pyruvate enolate transition state formed following C-C bond cleavage in the retro-aldol and decarboxylation reactions. The chain is 4-hydroxy-4-methyl-2-oxoglutarate aldolase from Thermus thermophilus (strain ATCC 27634 / DSM 579 / HB8).